The primary structure comprises 278 residues: Checkpoint protein HUS1B (278 aa).

It belongs to the HUS1 family. As to quaternary structure, interacts with RAD1 and RAD9B. In terms of tissue distribution, expressed strongly in testis, less in spleen, thymus, prostate, colon and leukocytes.

The protein is Checkpoint protein HUS1B (HUS1B) of Homo sapiens (Human).